A 169-amino-acid polypeptide reads, in one-letter code: Cell division inhibitor SulA (169 aa).

Residues 106 to 112 (ALRTGNY) are ftsZ binding. Residues 162–169 (KIHSNLYH) are lon protease binding.

It belongs to the SulA family. As to quaternary structure, interacts with FtsZ. Is rapidly cleaved and degraded by the Lon protease once DNA damage is repaired.

Component of the SOS system and an inhibitor of cell division. Accumulation of SulA causes rapid cessation of cell division and the appearance of long, non-septate filaments. In the presence of GTP, binds a polymerization-competent form of FtsZ in a 1:1 ratio, thus inhibiting FtsZ polymerization and therefore preventing it from participating in the assembly of the Z ring. This mechanism prevents the premature segregation of damaged DNA to daughter cells during cell division. This Escherichia coli O45:K1 (strain S88 / ExPEC) protein is Cell division inhibitor SulA.